The chain runs to 261 residues: Troponin T, slow skeletal muscle (261 aa).

A compositionally biased stretch (acidic residues) spans 1 to 30; sequence MSDTEEQEYEEEQAEDEEAVEEEAPEEPEP. Disordered regions lie at residues 1–61 and 108–152; these read MSDT…ERVD and ERAE…KKKV. Serine 2 carries the post-translational modification Phosphoserine; by CK2. Residues 31 to 40 show a composition bias toward basic and acidic residues; that stretch reads VAEREEERPK. The segment covering 42 to 54 has biased composition (pro residues); the sequence is SRPVVPPLIPPKI. The segment covering 108-148 has biased composition (basic and acidic residues); it reads ERAEQQRFRTEKERERQAKLAEEKMRKEEEEAKKRAEDDAK.

This sequence belongs to the troponin T family. Interacts with TPM3. As to expression, expressed in soleus muscle. Isoform 4 is predominantly expressed in fast muscles.

Functionally, troponin T is the tropomyosin-binding subunit of troponin, the thin filament regulatory complex which confers calcium-sensitivity to striated muscle actomyosin ATPase activity. The sequence is that of Troponin T, slow skeletal muscle (Tnnt1) from Rattus norvegicus (Rat).